A 73-amino-acid chain; its full sequence is Conotoxin MaI51 (73 aa).

A signal peptide spans 1–19 (MQKLTILLLVAAVLLSTQA). Residues 20–41 (LNQEKRPKEMINVLSKGKTNAE) constitute a propeptide that is removed on maturation. Q46 carries the post-translational modification Pyrrolidone carboxylic acid. 3 disulfide bridges follow: C47–C61, C54–C65, and C60–C69. Residue I72 is modified to Isoleucine amide.

Belongs to the conotoxin O2 superfamily. As to expression, expressed by the venom duct.

The protein resides in the secreted. This Conus marmoreus (Marble cone) protein is Conotoxin MaI51.